The primary structure comprises 110 residues: Holo-[acyl-carrier-protein] synthase (110 aa).

2 residues coordinate Mg(2+): Asp8 and Glu54.

Belongs to the P-Pant transferase superfamily. AcpS family. It depends on Mg(2+) as a cofactor.

It is found in the cytoplasm. It carries out the reaction apo-[ACP] + CoA = holo-[ACP] + adenosine 3',5'-bisphosphate + H(+). Functionally, transfers the 4'-phosphopantetheine moiety from coenzyme A to a Ser of acyl-carrier-protein. This chain is Holo-[acyl-carrier-protein] synthase, found in Mycoplasma capricolum subsp. capricolum (strain California kid / ATCC 27343 / NCTC 10154).